Here is a 214-residue protein sequence, read N- to C-terminus: ATP phosphoribosyltransferase (214 aa).

This sequence belongs to the ATP phosphoribosyltransferase family. Short subfamily. In terms of assembly, heteromultimer composed of HisG and HisZ subunits.

Its subcellular location is the cytoplasm. It catalyses the reaction 1-(5-phospho-beta-D-ribosyl)-ATP + diphosphate = 5-phospho-alpha-D-ribose 1-diphosphate + ATP. It functions in the pathway amino-acid biosynthesis; L-histidine biosynthesis; L-histidine from 5-phospho-alpha-D-ribose 1-diphosphate: step 1/9. Catalyzes the condensation of ATP and 5-phosphoribose 1-diphosphate to form N'-(5'-phosphoribosyl)-ATP (PR-ATP). Has a crucial role in the pathway because the rate of histidine biosynthesis seems to be controlled primarily by regulation of HisG enzymatic activity. The polypeptide is ATP phosphoribosyltransferase (Deinococcus deserti (strain DSM 17065 / CIP 109153 / LMG 22923 / VCD115)).